Reading from the N-terminus, the 242-residue chain is ATP synthase subunit a (242 aa).

Helical transmembrane passes span 29 to 49, 83 to 103, 114 to 134, 140 to 160, 181 to 201, and 206 to 226; these read SAVA…IAFV, VFFP…IIGM, IIVT…YGIY, FFSL…MVII, VAGH…TWFF, and IALV…QAYI.

This sequence belongs to the ATPase A chain family. As to quaternary structure, F-type ATPases have 2 components, CF(1) - the catalytic core - and CF(0) - the membrane proton channel. CF(1) has five subunits: alpha(3), beta(3), gamma(1), delta(1), epsilon(1). CF(0) has three main subunits: a(1), b(2) and c(9-12). The alpha and beta chains form an alternating ring which encloses part of the gamma chain. CF(1) is attached to CF(0) by a central stalk formed by the gamma and epsilon chains, while a peripheral stalk is formed by the delta and b chains.

It localises to the cell inner membrane. Key component of the proton channel; it plays a direct role in the translocation of protons across the membrane. The chain is ATP synthase subunit a from Orientia tsutsugamushi (strain Boryong) (Rickettsia tsutsugamushi).